Reading from the N-terminus, the 560-residue chain is DNA ligase B (560 aa).

Residue lysine 124 is the N6-AMP-lysine intermediate of the active site.

The protein belongs to the NAD-dependent DNA ligase family. LigB subfamily.

The enzyme catalyses NAD(+) + (deoxyribonucleotide)n-3'-hydroxyl + 5'-phospho-(deoxyribonucleotide)m = (deoxyribonucleotide)n+m + AMP + beta-nicotinamide D-nucleotide.. In terms of biological role, catalyzes the formation of phosphodiester linkages between 5'-phosphoryl and 3'-hydroxyl groups in double-stranded DNA using NAD as a coenzyme and as the energy source for the reaction. The chain is DNA ligase B from Escherichia coli (strain K12 / DH10B).